The primary structure comprises 253 residues: Imidazole glycerol phosphate synthase subunit HisF (253 aa).

Catalysis depends on residues aspartate 11 and aspartate 130.

Belongs to the HisA/HisF family. In terms of assembly, heterodimer of HisH and HisF.

It is found in the cytoplasm. The enzyme catalyses 5-[(5-phospho-1-deoxy-D-ribulos-1-ylimino)methylamino]-1-(5-phospho-beta-D-ribosyl)imidazole-4-carboxamide + L-glutamine = D-erythro-1-(imidazol-4-yl)glycerol 3-phosphate + 5-amino-1-(5-phospho-beta-D-ribosyl)imidazole-4-carboxamide + L-glutamate + H(+). Its pathway is amino-acid biosynthesis; L-histidine biosynthesis; L-histidine from 5-phospho-alpha-D-ribose 1-diphosphate: step 5/9. Its function is as follows. IGPS catalyzes the conversion of PRFAR and glutamine to IGP, AICAR and glutamate. The HisF subunit catalyzes the cyclization activity that produces IGP and AICAR from PRFAR using the ammonia provided by the HisH subunit. This chain is Imidazole glycerol phosphate synthase subunit HisF, found in Lysinibacillus sphaericus (strain C3-41).